Reading from the N-terminus, the 161-residue chain is MRWSLCCHINVRIAYTICGIIIGLFWACVYIFAWKNWVALAACLTATAFAFETFYFYLSVKRDTILNWKSQTFQVLFWINLIVGFLSIGGMITAIVLAATKHQGVSNKDQHGLNWWSTATWFLVMLKWTWQNAFIARYYGKLLTKSIIHPEEPDDPSTWKF.

4 helical membrane-spanning segments follow: residues 13–33 (IAYT…YIFA), 38–58 (VALA…YFYL), 75–95 (VLFW…ITAI), and 115–135 (WWST…NAFI).

This sequence belongs to the HRG family.

The protein localises to the membrane. Heme transporter. The chain is Heme transporter hrg-6 (hrg-6) from Caenorhabditis elegans.